The following is a 217-amino-acid chain: MPHNKHTVYAITDATLMPTTASLCHRVELALRSGVTWLQYRDKSSNTSKRSEQAQALKALCQTYNAKLIINDDTALAKQVGADGVHLGQTDGCIVSARELLGPQAIIGSTCHASLELAERALAQGSSYVAFGRFFASNTKPNAAPAQLSLLAHAQQKFTCPIVAIGGITPSNGAQLLHAGATTLAVCHSLFADDNVEYRAKCLLGLTPNAEDALVTS.

Residues 39 to 43 and asparagine 71 contribute to the 4-amino-2-methyl-5-(diphosphooxymethyl)pyrimidine site; that span reads QYRDK. Aspartate 72 and aspartate 91 together coordinate Mg(2+). Threonine 110 provides a ligand contact to 4-amino-2-methyl-5-(diphosphooxymethyl)pyrimidine. 137–139 provides a ligand contact to 2-[(2R,5Z)-2-carboxy-4-methylthiazol-5(2H)-ylidene]ethyl phosphate; that stretch reads SNT. Lysine 140 lines the 4-amino-2-methyl-5-(diphosphooxymethyl)pyrimidine pocket. Glycine 167 serves as a coordination point for 2-[(2R,5Z)-2-carboxy-4-methylthiazol-5(2H)-ylidene]ethyl phosphate.

The protein belongs to the thiamine-phosphate synthase family. Mg(2+) is required as a cofactor.

The enzyme catalyses 2-[(2R,5Z)-2-carboxy-4-methylthiazol-5(2H)-ylidene]ethyl phosphate + 4-amino-2-methyl-5-(diphosphooxymethyl)pyrimidine + 2 H(+) = thiamine phosphate + CO2 + diphosphate. The catalysed reaction is 2-(2-carboxy-4-methylthiazol-5-yl)ethyl phosphate + 4-amino-2-methyl-5-(diphosphooxymethyl)pyrimidine + 2 H(+) = thiamine phosphate + CO2 + diphosphate. It carries out the reaction 4-methyl-5-(2-phosphooxyethyl)-thiazole + 4-amino-2-methyl-5-(diphosphooxymethyl)pyrimidine + H(+) = thiamine phosphate + diphosphate. It participates in cofactor biosynthesis; thiamine diphosphate biosynthesis; thiamine phosphate from 4-amino-2-methyl-5-diphosphomethylpyrimidine and 4-methyl-5-(2-phosphoethyl)-thiazole: step 1/1. Functionally, condenses 4-methyl-5-(beta-hydroxyethyl)thiazole monophosphate (THZ-P) and 2-methyl-4-amino-5-hydroxymethyl pyrimidine pyrophosphate (HMP-PP) to form thiamine monophosphate (TMP). The sequence is that of Thiamine-phosphate synthase from Saccharophagus degradans (strain 2-40 / ATCC 43961 / DSM 17024).